A 242-amino-acid polypeptide reads, in one-letter code: MLIIPAIDIYKHKVVRMETGKKEKIVLEFNNPLDLAKYWEEKGAKALHLIDLQSAIDANDESKSIVRDIVRSVSIPVEVGGGYRSREKIEEAISWGVWRVIVSSILGMELDYLLDLFSKYENKIIPSIDWYDGKVGIKGWQDFIEWRDIKRKIDLLKVREVIFTDISRDGTLKGVNLENIKNFLSLHDYDVWIAGGISSIEDVIKIKDLSENTGRIKGIIIGRALLEGKINWEEAKKIIDAS.

Catalysis depends on aspartate 8, which acts as the Proton acceptor. The active-site Proton donor is the aspartate 129.

This sequence belongs to the HisA/HisF family.

It localises to the cytoplasm. It catalyses the reaction 1-(5-phospho-beta-D-ribosyl)-5-[(5-phospho-beta-D-ribosylamino)methylideneamino]imidazole-4-carboxamide = 5-[(5-phospho-1-deoxy-D-ribulos-1-ylimino)methylamino]-1-(5-phospho-beta-D-ribosyl)imidazole-4-carboxamide. Its pathway is amino-acid biosynthesis; L-histidine biosynthesis; L-histidine from 5-phospho-alpha-D-ribose 1-diphosphate: step 4/9. This is 1-(5-phosphoribosyl)-5-[(5-phosphoribosylamino)methylideneamino] imidazole-4-carboxamide isomerase from Dictyoglomus thermophilum (strain ATCC 35947 / DSM 3960 / H-6-12).